The chain runs to 205 residues: Outer-membrane lipoprotein LolB (205 aa).

Positions 1-17 are cleaved as a signal peptide; the sequence is MFLRHVIVFSFIALLAG. Cysteine 18 carries N-palmitoyl cysteine lipidation. Cysteine 18 carries the S-diacylglycerol cysteine lipid modification.

The protein belongs to the LolB family. As to quaternary structure, monomer.

The protein resides in the cell outer membrane. Functionally, plays a critical role in the incorporation of lipoproteins in the outer membrane after they are released by the LolA protein. The protein is Outer-membrane lipoprotein LolB of Pseudomonas fluorescens (strain Pf0-1).